We begin with the raw amino-acid sequence, 242 residues long: Probable transcriptional regulatory protein NMB1648 (242 aa).

This sequence belongs to the TACO1 family.

It is found in the cytoplasm. The sequence is that of Probable transcriptional regulatory protein NMB1648 from Neisseria meningitidis serogroup B (strain ATCC BAA-335 / MC58).